Here is a 349-residue protein sequence, read N- to C-terminus: Phosphoribosylformylglycinamidine cyclo-ligase (349 aa).

It belongs to the AIR synthase family.

It localises to the cytoplasm. It carries out the reaction 2-formamido-N(1)-(5-O-phospho-beta-D-ribosyl)acetamidine + ATP = 5-amino-1-(5-phospho-beta-D-ribosyl)imidazole + ADP + phosphate + H(+). Its pathway is purine metabolism; IMP biosynthesis via de novo pathway; 5-amino-1-(5-phospho-D-ribosyl)imidazole from N(2)-formyl-N(1)-(5-phospho-D-ribosyl)glycinamide: step 2/2. This chain is Phosphoribosylformylglycinamidine cyclo-ligase, found in Psychrobacter cryohalolentis (strain ATCC BAA-1226 / DSM 17306 / VKM B-2378 / K5).